The primary structure comprises 395 residues: Protein PELOTA 2 (395 aa).

This sequence belongs to the eukaryotic release factor 1 family. Pelota subfamily. Requires a divalent metal cation as cofactor.

The protein resides in the cytoplasm. The protein localises to the nucleus. Component of the Pelota-HBS1L complex, a complex that recognizes stalled ribosomes and triggers the No-Go Decay (NGD) pathway. In the Pelota-HBS1L complex, pelo recognizes ribosomes stalled at the 3' end of an mRNA and engages stalled ribosomes by destabilizing mRNA in the mRNA channel. Following ribosome-binding, the Pelota-HBS1L complex promotes the disassembly of stalled ribosomes, followed by degradation of damaged mRNAs as part of the NGD pathway. The sequence is that of Protein PELOTA 2 (PEL2) from Arabidopsis thaliana (Mouse-ear cress).